The chain runs to 402 residues: Zinc finger protein 587B (402 aa).

The region spanning 15–91 (VTFEDVAVKF…PVTGVSPKKA (77 aa)) is the KRAB domain. The segment at 92-114 (HPCEMCGPILGDILHVADHQGTH) adopts a C2H2-type 1 zinc-finger fold. A C2H2-type 2; degenerate zinc finger spans residues 120 to 142 (HRCEAWGNKLYDSGNFHQHQNEH). Residues Lys177, Lys200, and Lys253 each participate in a glycyl lysine isopeptide (Lys-Gly) (interchain with G-Cter in SUMO2) cross-link. 5 consecutive C2H2-type zinc fingers follow at residues 242-264 (YVCCECGKSFSKYVSFSNHQRVH), 270-292 (YECGECEKSFSQKSSLIQHQQFH), 298-320 (YGCEECGKYFSLEGYLRRHQKVH), 326-348 (YECGECGKSFSSNVNLKSHQRIH), and 354-383 (YKCGECEKSFSRKPSLSYHQRFGRPRWVDH). Lys366 is covalently cross-linked (Glycyl lysine isopeptide (Lys-Gly) (interchain with G-Cter in SUMO2)).

Belongs to the krueppel C2H2-type zinc-finger protein family.

It localises to the nucleus. Its function is as follows. May be involved in transcriptional regulation. This is Zinc finger protein 587B (ZNF587B) from Homo sapiens (Human).